The primary structure comprises 491 residues: UDP-N-acetylmuramate--L-alanine ligase (491 aa).

126-132 (GTHGKTT) is a binding site for ATP.

The protein belongs to the MurCDEF family.

It localises to the cytoplasm. The enzyme catalyses UDP-N-acetyl-alpha-D-muramate + L-alanine + ATP = UDP-N-acetyl-alpha-D-muramoyl-L-alanine + ADP + phosphate + H(+). The protein operates within cell wall biogenesis; peptidoglycan biosynthesis. Its function is as follows. Cell wall formation. In Salmonella paratyphi A (strain ATCC 9150 / SARB42), this protein is UDP-N-acetylmuramate--L-alanine ligase.